The primary structure comprises 954 residues: MSMPKDFTFTDYKPYDFANRRHIGPSPAEMDEMLKVVGYPSLDALIDDTVPPSIRQRTPLAWGAPMTEREALDKLRETANRNRKLVSLIGQGYYGTITPPVIQRNILENPAWYTAYTPYQPEISQGRLEALLNYQTMVCDLTGLDVANASLLDEATAAAEAMAIAERVAKSKAKAFFIDENCHPQTIALLKTRAEPLGWQIVLGDPFEDLDAAGVFGAIFQYPGTYGHVRDFSGLIAKLHGQGAIAAVAADPLALALLKSPGEMGADIAIGSTQRFGVPVGYGGPHAAYMAVKDAYKRSMPGRLVGVSVDARGNRAYRLSLQTREQHIRREKATSNICTAQVLLAVMASMYAVFHGPDGIKAIAQSVHQKTVRLAMGLEKLGYTVEPDVFFDTITVEVGKLQGIILKAAVAEEVNLRKIGTTRIGISLDERSRPVTLEAVWRAFGGDFKVEEFEPDYRLPQELLRTSAYLTHPIFHMNRAESEMTRYMRRLADRDLALDRAMIPLGSCTMKLNATAEMLPITWPEFSEIHPFVPADQALGYQHLIEDLSQKLCAITGYDAISMQPNSGAQGEYAGLLAIRAYHIANGNEHRDVCLIPTSAHGTNPASAQMAGMKVVVVKVSDAGEIDMDDFRAKAEQYADTLSCCMITYPSTHGVFEENVREVCEVVHKHGGQVYLDGANMNAMVGLSRPGDIGSDVSHLNLHKTFCIPHGGGGPGMGPIGVKSHLAPFLPGHPQTDGHEGAVSAAPFGSASILPISWSYCLMMGGEGLTQATKVAILNANYVAARLKGAYDVLYKSAKGRVAHECIIDTRPLAESAGVTVDDVAKRLIDCGFHAPTMSWPVAGTLMIEPTESETKAELDRFCDAMLAIREEARAIEDGRMDKVNNPLKNAPHTVEDLVGDWDRPYSREQACFPPGAFRVDKYWSPVNRVDNVYGDRNLVCTCPPIESYAEAAE.

Lysine 704 bears the N6-(pyridoxal phosphate)lysine mark.

The protein belongs to the GcvP family. The glycine cleavage system is composed of four proteins: P, T, L and H. Pyridoxal 5'-phosphate is required as a cofactor.

It catalyses the reaction N(6)-[(R)-lipoyl]-L-lysyl-[glycine-cleavage complex H protein] + glycine + H(+) = N(6)-[(R)-S(8)-aminomethyldihydrolipoyl]-L-lysyl-[glycine-cleavage complex H protein] + CO2. Its function is as follows. The glycine cleavage system catalyzes the degradation of glycine. The P protein binds the alpha-amino group of glycine through its pyridoxal phosphate cofactor; CO(2) is released and the remaining methylamine moiety is then transferred to the lipoamide cofactor of the H protein. This is Glycine dehydrogenase (decarboxylating) from Rhizobium meliloti (strain 1021) (Ensifer meliloti).